Consider the following 156-residue polypeptide: Ribosomal RNA large subunit methyltransferase H (156 aa).

S-adenosyl-L-methionine is bound by residues L72, G104, and 123-128 (FGAMVW).

It belongs to the RNA methyltransferase RlmH family. As to quaternary structure, homodimer.

It is found in the cytoplasm. It carries out the reaction pseudouridine(1915) in 23S rRNA + S-adenosyl-L-methionine = N(3)-methylpseudouridine(1915) in 23S rRNA + S-adenosyl-L-homocysteine + H(+). Its function is as follows. Specifically methylates the pseudouridine at position 1915 (m3Psi1915) in 23S rRNA. This is Ribosomal RNA large subunit methyltransferase H from Ruegeria pomeroyi (strain ATCC 700808 / DSM 15171 / DSS-3) (Silicibacter pomeroyi).